The following is a 233-amino-acid chain: Orotidine 5'-phosphate decarboxylase (233 aa).

Substrate is bound by residues Asp11, Lys34, 61–70 (DLKLHDIPNT), Thr117, Arg179, Gln188, Gly208, and Arg209. Lys63 acts as the Proton donor in catalysis.

This sequence belongs to the OMP decarboxylase family. Type 1 subfamily. In terms of assembly, homodimer.

It carries out the reaction orotidine 5'-phosphate + H(+) = UMP + CO2. The protein operates within pyrimidine metabolism; UMP biosynthesis via de novo pathway; UMP from orotate: step 2/2. Its function is as follows. Catalyzes the decarboxylation of orotidine 5'-monophosphate (OMP) to uridine 5'-monophosphate (UMP). The sequence is that of Orotidine 5'-phosphate decarboxylase from Streptococcus pneumoniae (strain P1031).